A 396-amino-acid chain; its full sequence is Phosphoglycerate kinase (396 aa).

Substrate-binding positions include aspartate 24–asparagine 26, arginine 39, histidine 62–arginine 65, arginine 120, and arginine 153. ATP-binding positions include lysine 203, glycine 294, glutamate 325, and glycine 352–serine 355.

This sequence belongs to the phosphoglycerate kinase family. In terms of assembly, monomer.

The protein resides in the cytoplasm. The enzyme catalyses (2R)-3-phosphoglycerate + ATP = (2R)-3-phospho-glyceroyl phosphate + ADP. It participates in carbohydrate degradation; glycolysis; pyruvate from D-glyceraldehyde 3-phosphate: step 2/5. The protein is Phosphoglycerate kinase of Dictyoglomus turgidum (strain DSM 6724 / Z-1310).